The sequence spans 265 residues: S-adenosylmethionine decarboxylase proenzyme (265 aa).

Ser114 acts as the Schiff-base intermediate with substrate; via pyruvic acid in catalysis. Position 114 is a pyruvic acid (Ser); by autocatalysis (Ser114). Catalysis depends on His119, which acts as the Proton acceptor; for processing activity. The active-site Proton donor; for catalytic activity is Cys142.

This sequence belongs to the prokaryotic AdoMetDC family. Type 2 subfamily. Heterooctamer of four alpha and four beta chains arranged as a tetramer of alpha/beta heterodimers. Requires pyruvate as cofactor. Post-translationally, is synthesized initially as an inactive proenzyme. Formation of the active enzyme involves a self-maturation process in which the active site pyruvoyl group is generated from an internal serine residue via an autocatalytic post-translational modification. Two non-identical subunits are generated from the proenzyme in this reaction, and the pyruvate is formed at the N-terminus of the alpha chain, which is derived from the carboxyl end of the proenzyme. The post-translation cleavage follows an unusual pathway, termed non-hydrolytic serinolysis, in which the side chain hydroxyl group of the serine supplies its oxygen atom to form the C-terminus of the beta chain, while the remainder of the serine residue undergoes an oxidative deamination to produce ammonia and the pyruvoyl group blocking the N-terminus of the alpha chain.

The enzyme catalyses S-adenosyl-L-methionine + H(+) = S-adenosyl 3-(methylsulfanyl)propylamine + CO2. Its pathway is amine and polyamine biosynthesis; S-adenosylmethioninamine biosynthesis; S-adenosylmethioninamine from S-adenosyl-L-methionine: step 1/1. Functionally, catalyzes the decarboxylation of S-adenosylmethionine to S-adenosylmethioninamine (dcAdoMet), the propylamine donor required for the synthesis of the polyamines spermine and spermidine from the diamine putrescine. This chain is S-adenosylmethionine decarboxylase proenzyme, found in Buchnera aphidicola subsp. Acyrthosiphon pisum (strain APS) (Acyrthosiphon pisum symbiotic bacterium).